Consider the following 78-residue polypeptide: Large ribosomal subunit protein bL28 (78 aa).

Positions Met1–Asn23 are disordered.

It belongs to the bacterial ribosomal protein bL28 family.

The chain is Large ribosomal subunit protein bL28 from Shewanella pealeana (strain ATCC 700345 / ANG-SQ1).